Reading from the N-terminus, the 120-residue chain is Large ribosomal subunit protein uL18 (120 aa).

This sequence belongs to the universal ribosomal protein uL18 family. Part of the 50S ribosomal subunit; part of the 5S rRNA/L5/L18/L25 subcomplex. Contacts the 5S and 23S rRNAs.

This is one of the proteins that bind and probably mediate the attachment of the 5S RNA into the large ribosomal subunit, where it forms part of the central protuberance. This is Large ribosomal subunit protein uL18 from Bacillus cereus (strain AH820).